The following is a 200-amino-acid chain: MARCKS-related protein (200 aa).

Positions 1-200 (MGSQSSKAPR…PTPASAEQNE (200 aa)) are disordered. A lipid anchor (N-myristoyl glycine) is attached at Gly2. At Thr14 the chain carries Phosphothreonine. Residues 16–26 (EEAAGASPAKA) show a composition bias toward low complexity. 3 positions are modified to phosphoserine: Ser22, Ser36, and Ser48. A compositionally biased stretch (low complexity) spans 53-64 (GTDEAAGATGDA). The residue at position 71 (Ser71) is a Phosphoserine. A compositionally biased stretch (basic and acidic residues) spans 74–85 (AEAKGEVAPKET). Position 85 is a phosphothreonine (Thr85). Residues 86-98 (PKKKKKFSFKKPF) show a composition bias toward basic residues. An effector domain involved in lipid-binding and calmodulin-binding region spans residues 87 to 110 (KKKKKFSFKKPFKLSGLSFKRNRK). Phosphoserine; by PKC occurs at positions 93, 101, and 104. Ser119 is subject to Phosphoserine. Residue Ser120 is modified to Phosphoserine; by MAPK8. Phosphoserine is present on residues Ser132 and Ser135. Thr148 is modified (phosphothreonine; by MAPK8). A phosphoserine mark is found at Ser151, Ser162, and Ser165. Positions 156-165 (AKGAEASAAS) are enriched in low complexity. Position 170 is a phosphothreonine (Thr170). A compositionally biased stretch (low complexity) spans 178–200 (AAEPSTPSGPESGPTPASAEQNE). Thr183 carries the phosphothreonine; by MAPK8 modification. At Thr192 the chain carries Phosphothreonine.

The protein belongs to the MARCKS family. Binds to filamentous actin (F-actin), but not to monomeric G-actin, independently of its phosphorylation status. Interacts with calmodulin. Post-translationally, phosphorylated. Phosphorylation at Ser-120 and Thr-183 is non-redundantly catalyzed by MAPK8 in vivo. Phosphorylation at Thr-148 is preferentially catalyzed by MAPK8 in vivo, but this modification can also be catalyzed by other kinases in the absence of MAPK8. May be phosphorylated by protein kinase C, which disrupts the interaction with calmodulin. As to expression, expressed at high levels in brain cortex and hippocampus, including dentate gyrus, anterior olfactory nucleus, primary olfactory cortex, entorhinal cortex, medial preoptic area and dorsomedial hypothalamic nucleus (at protein level). Expressed in neuronal cells (at protein level). Detected in the retina. Strongly expressed in testis and uterus; expressed at lower levels in cerebellum, cerebrum, adipose tissue, spleen, kidney, thyroid, liver, lung, skeletal muscle and heart. Detected in T-cells and B-cells.

The protein localises to the cytoplasm. It is found in the cytoskeleton. It localises to the cell membrane. In terms of biological role, involved in the control of cell movement by regulating actin cytoskeleton homeostasis and filopodium and lamellipodium formation. When unphosphorylated, induces cell migration. When phosphorylated by MAPK8, induces actin bundles formation and stabilization, thereby reducing actin plasticity, hence restricting cell movement, including neuronal migration. May be involved in coupling the protein kinase C and calmodulin signal transduction systems. The sequence is that of MARCKS-related protein (Marcksl1) from Mus musculus (Mouse).